The chain runs to 1649 residues: Cortactin-binding protein 2 (1649 aa).

The segment at Met1 to Ala23 is disordered. The stretch at Arg119–Lys276 forms a coiled coil. Disordered stretches follow at residues Ile366–Gly440 and Gly454–Ser478. Composition is skewed to low complexity over residues Val368–Ser379 and Pro386–Ser396. Residues Gln411–Ala422 are compositionally biased toward polar residues. Residue Arg498 is modified to Asymmetric dimethylarginine. The tract at residues Phe499–Ser616 is disordered. The segment covering Thr583 to Gln593 has biased composition (polar residues). ANK repeat units lie at residues Gly709–Tyr739, Asp743–Ala772, Asn776–His805, Gly809–Val838, and Asp842–Gly871. The interval Asn872–Ser897 is disordered. One copy of the ANK 6 repeat lies at Glu912–Arg942. A disordered region spans residues Ser1444–Glu1482. Ser1524 carries the phosphoserine modification. A disordered region spans residues Pro1616–Asn1649. Low complexity predominate over residues Ser1624–Gln1638. The span at Ile1639 to Asn1649 shows a compositional bias: polar residues.

Interacts with CTTN/cortactin SH3 domain. Interacts with STRN, STRN4/zinedin and MOB4/phocein; this interactions mediate the association with the STRIPAK core complex and may regulate dendritic spine distribution of the STRIPAK complex in hippocampal neurons. Activation of glutamate receptors weakens the interaction with STRN and STRN4.

Its subcellular location is the cytoplasm. It is found in the cell cortex. The protein resides in the cell projection. The protein localises to the dendritic spine. In terms of biological role, regulates the dendritic spine distribution of CTTN/cortactin in hippocampal neurons, and thus controls dendritic spinogenesis and dendritic spine maintenance. Associates with the striatin-interacting phosphatase and kinase (STRIPAK) core complex to regulate dendritic spine distribution of the STRIPAK complex in hippocampal neurons. The chain is Cortactin-binding protein 2 (CTTNBP2) from Aotus nancymaae (Ma's night monkey).